A 651-amino-acid polypeptide reads, in one-letter code: Acetyl-coenzyme A synthetase (651 aa).

Residues 189-192 (RGGK), Thr311, and Asn335 contribute to the CoA site. ATP-binding positions include 387-389 (GEP), 411-416 (DTWWQT), Asp500, and Arg515. CoA is bound at residue Ser523. ATP is bound at residue Arg526. Residues Val537, His539, and Val542 each contribute to the Mg(2+) site. Residue Arg586 participates in CoA binding. N6-acetyllysine is present on Lys611.

It belongs to the ATP-dependent AMP-binding enzyme family. It depends on Mg(2+) as a cofactor. Post-translationally, acetylated. Deacetylation by the SIR2-homolog deacetylase activates the enzyme.

The enzyme catalyses acetate + ATP + CoA = acetyl-CoA + AMP + diphosphate. Its function is as follows. Catalyzes the conversion of acetate into acetyl-CoA (AcCoA), an essential intermediate at the junction of anabolic and catabolic pathways. AcsA undergoes a two-step reaction. In the first half reaction, AcsA combines acetate with ATP to form acetyl-adenylate (AcAMP) intermediate. In the second half reaction, it can then transfer the acetyl group from AcAMP to the sulfhydryl group of CoA, forming the product AcCoA. The protein is Acetyl-coenzyme A synthetase of Brucella melitensis biotype 1 (strain ATCC 23456 / CCUG 17765 / NCTC 10094 / 16M).